We begin with the raw amino-acid sequence, 327 residues long: Germination protease (327 aa).

Residues 1–7 (MNSVRTD) constitute a propeptide that is removed on maturation.

This sequence belongs to the peptidase A25 family. As to quaternary structure, homotetramer. Post-translationally, autoproteolytically processed. The inactive tetrameric zymogen termed p46 autoprocesses to a smaller form termed p41, which is active only during spore germination.

The catalysed reaction is Endopeptidase action with P4 Glu or Asp, P1 preferably Glu &gt; Asp, P1' hydrophobic and P2' Ala.. Functionally, initiates the rapid degradation of small, acid-soluble proteins during spore germination. The polypeptide is Germination protease (Clostridium acetobutylicum (strain ATCC 824 / DSM 792 / JCM 1419 / IAM 19013 / LMG 5710 / NBRC 13948 / NRRL B-527 / VKM B-1787 / 2291 / W)).